The following is a 454-amino-acid chain: Elongation factor Tu, mitochondrial (454 aa).

Residues 1-51 (MASVVLRNPSSKRLVPFSSQIYSRCGASVTSSYSISHSIGGDDLSSSTFGT) constitute a mitochondrion transit peptide. The tr-type G domain maps to 65 to 261 (KPHVNVGTIG…AVDEYIPDPV (197 aa)). The G1 stretch occupies residues 74 to 81 (GHVDHGKT). 74 to 81 (GHVDHGKT) is a GTP binding site. The residue at position 82 (Thr-82) is a Phosphothreonine. The tract at residues 115-119 (GITIA) is G2. Residues 136-139 (DCPG) are G3. GTP-binding positions include 136-140 (DCPGH) and 191-194 (NKVD). A G4 region spans residues 191–194 (NKVD). Residues 229–231 (SAL) form a G5 region.

Belongs to the TRAFAC class translation factor GTPase superfamily. Classic translation factor GTPase family. EF-Tu/EF-1A subfamily.

Its subcellular location is the mitochondrion. In terms of biological role, this protein promotes the GTP-dependent binding of aminoacyl-tRNA to the A-site of ribosomes during protein biosynthesis. In Arabidopsis thaliana (Mouse-ear cress), this protein is Elongation factor Tu, mitochondrial (TUFA).